Consider the following 519-residue polypeptide: Probable anion transporter 3, chloroplastic (519 aa).

The transit peptide at 1–76 (MAPPGQLLPL…PPPPATSLPG (76 aa)) directs the protein to the chloroplast. Residues 56-72 (LPFAPPRRLSRPPPPAT) show a composition bias toward pro residues. The interval 56–82 (LPFAPPRRLSRPPPPATSLPGASPGGG) is disordered. Transmembrane regions (helical) follow at residues 100–120 (VAAMLGLALALCNADRVVMSV), 138–158 (VVQSSFLWGYLVSPIIGGALV), 166–186 (VMAYGVALWSLATFLSPWAAA), 188–208 (SLWLFLSTRVLLGMAEGVALP), 229–249 (IAMAGFQLGNTIGLLLSPIIM), 253–273 (GIFGPFVIFGLFGFLWVLVWI), 326–346 (WALISANAMHSWGYFVILSWM), 362–382 (AWFSALPWVMMAVLGYVAGVV), 403–423 (IGFVGPGVALLGLNAAKSPVI), 424–444 (ASAWLTIAVGLKSFGHSGFLV), 460–480 (MSNTAGTFAAILGTVGAGFFV), and 488–508 (GFLILTSLLYFSSTLFWDIFA).

The protein belongs to the major facilitator superfamily. Sodium/anion cotransporter (TC 2.A.1.14) family.

The protein localises to the plastid. It localises to the chloroplast membrane. Functionally, probable anion transporter. The protein is Probable anion transporter 3, chloroplastic (PHT4;3) of Oryza sativa subsp. japonica (Rice).